The following is a 323-amino-acid chain: Pseudouridine-5'-phosphate glycosidase (323 aa).

The active-site Proton donor is glutamate 43. 2 residues coordinate substrate: lysine 104 and valine 124. A Mn(2+)-binding site is contributed by aspartate 156. Substrate is bound at residue 158–160 (SAD). The active-site Nucleophile is lysine 177.

It belongs to the pseudouridine-5'-phosphate glycosidase family. Homotrimer. Mn(2+) serves as cofactor.

The enzyme catalyses D-ribose 5-phosphate + uracil = psi-UMP + H2O. In terms of biological role, catalyzes the reversible cleavage of pseudouridine 5'-phosphate (PsiMP) to ribose 5-phosphate and uracil. Functions biologically in the cleavage direction, as part of a pseudouridine degradation pathway. The protein is Pseudouridine-5'-phosphate glycosidase of Streptomyces griseus subsp. griseus (strain JCM 4626 / CBS 651.72 / NBRC 13350 / KCC S-0626 / ISP 5235).